Here is a 246-residue protein sequence, read N- to C-terminus: Proteasome subunit alpha type-6 (246 aa).

This sequence belongs to the peptidase T1A family. The 26S proteasome consists of a 20S proteasome core and two 19S regulatory subunits. The 20S proteasome core is composed of 28 subunits that are arranged in four stacked rings, resulting in a barrel-shaped structure. The two end rings are each formed by seven alpha subunits, and the two central rings are each formed by seven beta subunits. The catalytic chamber with the active sites is on the inside of the barrel.

It localises to the cytoplasm. The protein localises to the nucleus. In terms of biological role, the proteasome is a multicatalytic proteinase complex which is characterized by its ability to cleave peptides with Arg, Phe, Tyr, Leu, and Glu adjacent to the leaving group at neutral or slightly basic pH. The proteasome has an ATP-dependent proteolytic activity. This is Proteasome subunit alpha type-6 (PAA1) from Nicotiana tabacum (Common tobacco).